A 188-amino-acid polypeptide reads, in one-letter code: Elongation factor P (188 aa).

It belongs to the elongation factor P family.

Its subcellular location is the cytoplasm. It participates in protein biosynthesis; polypeptide chain elongation. Functionally, involved in peptide bond synthesis. Stimulates efficient translation and peptide-bond synthesis on native or reconstituted 70S ribosomes in vitro. Probably functions indirectly by altering the affinity of the ribosome for aminoacyl-tRNA, thus increasing their reactivity as acceptors for peptidyl transferase. This is Elongation factor P from Exiguobacterium sibiricum (strain DSM 17290 / CCUG 55495 / CIP 109462 / JCM 13490 / 255-15).